The chain runs to 61 residues: Large ribosomal subunit protein bL32 (61 aa).

Residues 1–16 are compositionally biased toward basic residues; it reads MAVPKRKTSPSKRGMR. A disordered region spans residues 1-40; the sequence is MAVPKRKTSPSKRGMRRSADALKAPTYIEDKNSGELRRPH. The segment covering 28 to 40 has biased composition (basic and acidic residues); it reads IEDKNSGELRRPH.

It belongs to the bacterial ribosomal protein bL32 family.

The chain is Large ribosomal subunit protein bL32 from Sinorhizobium medicae (strain WSM419) (Ensifer medicae).